The chain runs to 718 residues: Probable protein S-acyltransferase 19 (718 aa).

2 helical membrane-spanning segments follow: residues 16 to 36 (VVAI…FAPF) and 41 to 61 (IWEY…FVLY). Positions 100–125 (ETGSHLQSSPSVASRTSTLPNSSVKG) are disordered. A compositionally biased stretch (polar residues) spans 103 to 124 (SHLQSSPSVASRTSTLPNSSVK). A DHHC domain is found at 174–224 (LFCTLCNAEVRKFSKHCRSCDKCVDCFDHHCRWLNNCVGRKNYMTFISLMA). The S-palmitoyl cysteine intermediate role is filled by cysteine 204. 2 helical membrane passes run 222–242 (LMAV…AVIV) and 277–297 (AVSM…MLLI). Disordered regions lie at residues 454 to 511 (SSVS…HVHE), 598 to 649 (PATT…QQQQ), and 664 to 718 (GPLV…GTRK). Polar residues-rich tracts occupy residues 479–488 (CRNSYAPSQG) and 598–626 (PATT…TQNP). The span at 673 to 687 (DGLRHDGDSGREGQD) shows a compositional bias: basic and acidic residues.

Belongs to the DHHC palmitoyltransferase family.

The protein resides in the cell membrane. The enzyme catalyses L-cysteinyl-[protein] + hexadecanoyl-CoA = S-hexadecanoyl-L-cysteinyl-[protein] + CoA. In terms of biological role, palmitoyl acyltransferase. The sequence is that of Probable protein S-acyltransferase 19 (PAT19) from Arabidopsis thaliana (Mouse-ear cress).